Consider the following 252-residue polypeptide: RNA-binding protein 2 (252 aa).

Disordered stretches follow at residues 1–34 (MADGFWNRQQQHLPPPGGMLKRPRTEYDTAPSGV) and 232–252 (RLQFSRSPGRRSGGPGPRGKR). Residues 152–238 (STLYVEGLPS…SYLRLQFSRS (87 aa)) form the RRM domain. Residues 242-252 (RSGGPGPRGKR) show a composition bias toward gly residues.

In terms of biological role, probable RNA-binding protein. This Medicago truncatula (Barrel medic) protein is RNA-binding protein 2.